The following is a 428-amino-acid chain: Enolase (428 aa).

(2R)-2-phosphoglycerate is bound at residue Q163. The active-site Proton donor is E205. D242, E285, and D312 together coordinate Mg(2+). The (2R)-2-phosphoglycerate site is built by K337, R366, S367, and K388. K337 serves as the catalytic Proton acceptor.

The protein belongs to the enolase family. Mg(2+) is required as a cofactor.

The protein localises to the cytoplasm. The protein resides in the secreted. It localises to the cell surface. The enzyme catalyses (2R)-2-phosphoglycerate = phosphoenolpyruvate + H2O. It participates in carbohydrate degradation; glycolysis; pyruvate from D-glyceraldehyde 3-phosphate: step 4/5. Its function is as follows. Catalyzes the reversible conversion of 2-phosphoglycerate (2-PG) into phosphoenolpyruvate (PEP). It is essential for the degradation of carbohydrates via glycolysis. The sequence is that of Enolase from Rhodopirellula baltica (strain DSM 10527 / NCIMB 13988 / SH1).